The primary structure comprises 1516 residues: Mediator of RNA polymerase II transcription subunit 14 (1516 aa).

Disordered regions lie at residues 22–98 (LSSQ…EVPA) and 1434–1516 (MHRQ…YPPQ). Residues 34–47 (SPAAPISPAPSGSA) are compositionally biased toward low complexity. Residues 72-83 (SEVDVKSIHSSD) are compositionally biased toward basic and acidic residues. Positions 1463 to 1473 (SHQQHMMNPGS) are enriched in low complexity. Gly residues predominate over residues 1474 to 1483 (VGPGSVGGPG). A compositionally biased stretch (low complexity) spans 1502-1516 (QSYHHPLHHQQYPPQ).

It belongs to the Mediator complex subunit 14 family. As to quaternary structure, component of the Mediator complex.

It is found in the nucleus. Component of the Mediator complex, a coactivator involved in the regulated transcription of nearly all RNA polymerase II-dependent genes. Mediator functions as a bridge to convey information from gene-specific regulatory proteins to the basal RNA polymerase II transcription machinery. Mediator is recruited to promoters by direct interactions with regulatory proteins and serves as a scaffold for the assembly of a functional preinitiation complex with RNA polymerase II and the general transcription factors. Required for transcription in the embryo and for phosphorylation of the RNA polymerase II C-terminal domain repeat. This is Mediator of RNA polymerase II transcription subunit 14 (rgr-1) from Caenorhabditis elegans.